Reading from the N-terminus, the 205-residue chain is Guanylate kinase (205 aa).

The Guanylate kinase-like domain maps to 7–185 (GNIFIISAAS…AEEDLRHIVN (179 aa)). 14-21 (AASGTGKT) lines the ATP pocket.

Belongs to the guanylate kinase family.

Its subcellular location is the cytoplasm. It carries out the reaction GMP + ATP = GDP + ADP. Essential for recycling GMP and indirectly, cGMP. This Neisseria meningitidis serogroup B (strain ATCC BAA-335 / MC58) protein is Guanylate kinase (gmk).